We begin with the raw amino-acid sequence, 337 residues long: Glycerol-3-phosphate dehydrogenase [NAD(P)+] (337 aa).

NADPH is bound by residues Trp-11, Arg-30, and Lys-102. Sn-glycerol 3-phosphate-binding residues include Lys-102, Gly-138, and Ser-140. Ala-142 is an NADPH binding site. Residues Lys-193, Asp-246, Ser-256, Arg-257, and Asn-258 each coordinate sn-glycerol 3-phosphate. Catalysis depends on Lys-193, which acts as the Proton acceptor. Residue Arg-257 coordinates NADPH. The NADPH site is built by Val-281 and Glu-283.

This sequence belongs to the NAD-dependent glycerol-3-phosphate dehydrogenase family.

Its subcellular location is the cytoplasm. It carries out the reaction sn-glycerol 3-phosphate + NAD(+) = dihydroxyacetone phosphate + NADH + H(+). The enzyme catalyses sn-glycerol 3-phosphate + NADP(+) = dihydroxyacetone phosphate + NADPH + H(+). The protein operates within membrane lipid metabolism; glycerophospholipid metabolism. Its function is as follows. Catalyzes the reduction of the glycolytic intermediate dihydroxyacetone phosphate (DHAP) to sn-glycerol 3-phosphate (G3P), the key precursor for phospholipid synthesis. The polypeptide is Glycerol-3-phosphate dehydrogenase [NAD(P)+] (Variovorax paradoxus (strain S110)).